Here is a 233-residue protein sequence, read N- to C-terminus: H-2 class II histocompatibility antigen, A-F alpha chain (233 aa).

Residues 1–88 (EDDIEADHVG…KRSNFTPATN (88 aa)) are alpha-1. At 1–195 (EDDIEADHVG…IPAPMSELTE (195 aa)) the chain is on the extracellular side. An alpha-2 region spans residues 89–182 (EAPQATVFPK…GLEEPVLKHW (94 aa)). The Ig-like C1-type domain maps to 91–183 (PQATVFPKSP…LEEPVLKHWE (93 aa)). Cys111 and Cys167 form a disulfide bridge. Asn122 carries N-linked (GlcNAc...) asparagine glycosylation. The connecting peptide stretch occupies residues 183 to 195 (EPEIPAPMSELTE). Residues 196–221 (TVVCALGLSVGLVGIVVGTIFIIQGL) traverse the membrane as a helical segment. Over 222-233 (RSGGTSRHPGPL) the chain is Cytoplasmic.

This sequence belongs to the MHC class II family.

It localises to the membrane. The polypeptide is H-2 class II histocompatibility antigen, A-F alpha chain (H2-Aa) (Mus musculus (Mouse)).